The primary structure comprises 377 residues: MIEVIDGQRQLKACKRIVVKIGSSLLTANGQGLDLDAISHWAMQIADLHNAGHEIILVSSGAVAEGMVRMKLTSRPTDLPSLQACAAIGQMGLIHTWSSVLEKHTIQTAQVLLTHDDLADRRRYLNSCDALQNLIEWRVIPVINENDTVSTDEIRFGDNDTLAAMVAGQVHADLLIILTDQQGMFDSDPRSNPNAKLLTTVNAMDDALFEMAGGGGVLGRGGMVTKVRAARLAAKSGCPTLIASGESDHVLSRLMSGELLGTLFSTDKDRITAHQQWLAAHLQTAGRLVIDAGAVEAIKQRHRSLLPVGVKAVEGHFNRGDVVECVDQSGQRVAVGRVNFSSRSAEIIKGLASDKVHQVLGEARSLEMIHRNHMAIY.

Lys-20 provides a ligand contact to ATP. 3 residues coordinate substrate: Ser-60, Asp-147, and Asn-159. 179–180 (TD) contributes to the ATP binding site. Residues 285–363 (AGRLVIDAGA…DKVHQVLGEA (79 aa)) form the PUA domain.

The protein belongs to the glutamate 5-kinase family.

The protein localises to the cytoplasm. The enzyme catalyses L-glutamate + ATP = L-glutamyl 5-phosphate + ADP. It functions in the pathway amino-acid biosynthesis; L-proline biosynthesis; L-glutamate 5-semialdehyde from L-glutamate: step 1/2. Functionally, catalyzes the transfer of a phosphate group to glutamate to form L-glutamate 5-phosphate. This is Glutamate 5-kinase from Acinetobacter baylyi (strain ATCC 33305 / BD413 / ADP1).